Consider the following 875-residue polypeptide: Alanine--tRNA ligase (875 aa).

4 residues coordinate Zn(2+): His-564, His-568, Cys-666, and His-670.

The protein belongs to the class-II aminoacyl-tRNA synthetase family. Homotetramer. Zn(2+) is required as a cofactor.

It localises to the cytoplasm. The catalysed reaction is tRNA(Ala) + L-alanine + ATP = L-alanyl-tRNA(Ala) + AMP + diphosphate. In terms of biological role, catalyzes the attachment of alanine to tRNA(Ala) in a two-step reaction: alanine is first activated by ATP to form Ala-AMP and then transferred to the acceptor end of tRNA(Ala). Also edits incorrectly charged Ser-tRNA(Ala) and Gly-tRNA(Ala) via its editing domain. The sequence is that of Alanine--tRNA ligase from Klebsiella pneumoniae subsp. pneumoniae (strain ATCC 700721 / MGH 78578).